A 710-amino-acid polypeptide reads, in one-letter code: Choline transporter-like protein 5 (710 aa).

The segment at 1–21 (MARKRKPPSSQGDPRRYDPDF) is disordered. At 1–32 (MARKRKPPSSQGDPRRYDPDFQGPTAKRTCTD) the chain is on the cytoplasmic side. Residues 33–53 (VLCCLIFLLFILGYVLLGLLA) traverse the membrane as a helical segment. Over 54 to 236 (WAHGDPRKMA…KLLEDYATSW (183 aa)) the chain is Extracellular. Residues N82 and N184 are each glycosylated (N-linked (GlcNAc...) asparagine). Residues 237–257 (KWILIGLTVAMALSWTFLILL) traverse the membrane as a helical segment. The Cytoplasmic portion of the chain corresponds to 258–260 (RFT). A helical membrane pass occupies residues 261–281 (AGFLFWFFIFGVLGIIGYGIW). Residues 282-319 (YCFLEYSSIQQRPQSTFWMYGFGIQRRVNMFFHLKETW) are Extracellular-facing. The chain crosses the membrane as a helical span at residues 320–340 (FSMMIILSAIEIIIIIVLIFL). Residues 341–345 (RTRIQ) lie on the Cytoplasmic side of the membrane. The chain crosses the membrane as a helical span at residues 346–366 (VAIILLQEGSKAISYLPSALI). Topologically, residues 367–368 (YP) are extracellular. The helical transmembrane segment at 369 to 389 (VLTFILLSICISYWAVTAVFL) threads the bilayer. The Cytoplasmic portion of the chain corresponds to 390–454 (ATSGVPIFKV…NYILTFQVYN (65 aa)). A helical transmembrane segment spans residues 455–475 (LFAFLWLINFVIALGQCALAG). At 476 to 509 (AFASYYWAMKKPDDIPPYPLFTAFGRAVRYHTGS) the chain is on the extracellular side. A helical transmembrane segment spans residues 510–530 (LAFGSLILASVQMFKVIVEYL). Residues 531 to 604 (DRRLKKAQNS…KVTVTDEVTY (74 aa)) are Cytoplasmic-facing. The chain crosses the membrane as a helical span at residues 605-625 (FVLLLGKVLVSGIVGVLAFLL). The Extracellular portion of the chain corresponds to 626-643 (FTERLQIIVDGPTTLNYY). The chain crosses the membrane as a helical span at residues 644 to 664 (WVPFLTLVFGSYMIAHGFFSV). Residues 665 to 710 (YSMCVETIFICFLEDLERNEGSPSRPYFVTPALMNILLEQGKIKKQ) are Cytoplasmic-facing.

The protein belongs to the CTL (choline transporter-like) family.

It is found in the cell membrane. The catalysed reaction is choline(out) + n H(+)(in) = choline(in) + n H(+)(out). Functionally, choline/H+ antiporter. This is Choline transporter-like protein 5 (Slc44a5) from Mus musculus (Mouse).